We begin with the raw amino-acid sequence, 158 residues long: Pyruvoyl-dependent arginine decarboxylase (158 aa).

Serine 44 is subject to Pyruvic acid (Ser).

This sequence belongs to the PdaD family. Requires pyruvate as cofactor.

It carries out the reaction L-arginine + H(+) = agmatine + CO2. The chain is Pyruvoyl-dependent arginine decarboxylase from Pyrococcus furiosus (strain ATCC 43587 / DSM 3638 / JCM 8422 / Vc1).